Reading from the N-terminus, the 153-residue chain is Conglutin delta 2 (153 aa).

Residues 1–22 (MAKLTILIALVAALVLVVHTSA) form the signal peptide. 4 cysteine pairs are disulfide-bonded: Cys-30/Cys-102, Cys-42/Cys-90, Cys-91/Cys-138, and Cys-104/Cys-146.

The protein belongs to the 2S seed storage albumins family. In terms of assembly, heterodimer of a small chain and a large chain; disulfide-linked. In terms of tissue distribution, expressed in developing cotyledons (at protein level).

The protein localises to the endoplasmic reticulum. This chain is Conglutin delta 2, found in Lupinus angustifolius (Narrow-leaved blue lupine).